An 81-amino-acid polypeptide reads, in one-letter code: Acyl carrier protein (81 aa).

The Carrier domain occupies 2-80 (ASNEEILAGL…DAVSYIASAQ (79 aa)). Serine 40 carries the post-translational modification O-(pantetheine 4'-phosphoryl)serine.

Belongs to the acyl carrier protein (ACP) family. Post-translationally, 4'-phosphopantetheine is transferred from CoA to a specific serine of apo-ACP by AcpS. This modification is essential for activity because fatty acids are bound in thioester linkage to the sulfhydryl of the prosthetic group.

The protein resides in the cytoplasm. Its pathway is lipid metabolism; fatty acid biosynthesis. In terms of biological role, carrier of the growing fatty acid chain in fatty acid biosynthesis. This is Acyl carrier protein from Renibacterium salmoninarum (strain ATCC 33209 / DSM 20767 / JCM 11484 / NBRC 15589 / NCIMB 2235).